The chain runs to 337 residues: Heme A synthase (337 aa).

5 helical membrane-spanning segments follow: residues 6 to 26 (ITKW…IGGI), 87 to 107 (FIHR…LIYF), 119 to 139 (LPYI…WYMV), 154 to 174 (LAFH…QLIK), and 192 to 212 (LIFS…GALV). His-256 provides a ligand contact to heme. A run of 3 helical transmembrane segments spans residues 258–278 (LVGY…LKIE), 285–305 (IAYF…ITLL), and 308–328 (VPII…SIII). Position 316 (His-316) interacts with heme.

The protein belongs to the COX15/CtaA family. Type 2 subfamily. In terms of assembly, interacts with CtaB. Heme b serves as cofactor.

The protein localises to the cell membrane. It carries out the reaction Fe(II)-heme o + 2 A + H2O = Fe(II)-heme a + 2 AH2. It functions in the pathway porphyrin-containing compound metabolism; heme A biosynthesis; heme A from heme O: step 1/1. In terms of biological role, catalyzes the conversion of heme O to heme A by two successive hydroxylations of the methyl group at C8. The first hydroxylation forms heme I, the second hydroxylation results in an unstable dihydroxymethyl group, which spontaneously dehydrates, resulting in the formyl group of heme A. The sequence is that of Heme A synthase from Rickettsia africae (strain ESF-5).